A 382-amino-acid polypeptide reads, in one-letter code: cAMP-dependent protein kinase type I-alpha regulatory subunit (382 aa).

The residue at position 2 (Ala-2) is an N-acetylalanine. The segment at 2-136 is dimerization and phosphorylation; the sequence is ATSSSSSSEE…AALAKAIEKN (135 aa). The segment at 62–96 is disordered; the sequence is TKQLLNQQKSGSRSDSREDEISPPPPMNPVVKGRR. The Pseudophosphorylation motif signature appears at 97–101; it reads RRGAI. Residues 138–255, Glu-203, Arg-212, 256–382, Glu-327, and Arg-336 each bind 3',5'-cyclic AMP; these read LFAH…SKVS and ILES…SLSV.

It belongs to the cAMP-dependent kinase regulatory chain family. As to quaternary structure, the inactive form of the enzyme is composed of two regulatory chains and two catalytic chains. Activation by cAMP produces two active catalytic monomers and a regulatory dimer that binds four cAMP molecules. The pseudophosphorylation site binds to the substrate-binding region of the catalytic chain but is not phosphorylated. The physiological significance of phosphorylations by other kinases is unclear.

It is found in the cell membrane. The protein is cAMP-dependent protein kinase type I-alpha regulatory subunit (PRKAR1A) of Gallus gallus (Chicken).